Reading from the N-terminus, the 170-residue chain is Peptide deformylase (170 aa).

2 residues coordinate Fe cation: C91 and H133. E134 is a catalytic residue. H137 contacts Fe cation.

The protein belongs to the polypeptide deformylase family. Requires Fe(2+) as cofactor.

The catalysed reaction is N-terminal N-formyl-L-methionyl-[peptide] + H2O = N-terminal L-methionyl-[peptide] + formate. In terms of biological role, removes the formyl group from the N-terminal Met of newly synthesized proteins. Requires at least a dipeptide for an efficient rate of reaction. N-terminal L-methionine is a prerequisite for activity but the enzyme has broad specificity at other positions. This is Peptide deformylase from Aeromonas salmonicida (strain A449).